The primary structure comprises 1334 residues: WASH complex subunit 2 (1334 aa).

Positions 1–219 are sufficient for interaction with WASHC3, WASHC4 and WASHC5; required for interaction with WASHC1; sequence MNRTSPDSER…VGSDRGSIVD (219 aa). Phosphoserine is present on residues Ser-157, Ser-159, Ser-204, Ser-205, and Ser-209. Positions 201 to 213 are enriched in low complexity; that stretch reads GELSSEEGSVGSD. Residues 201–471 are disordered; the sequence is GELSSEEGSV…SKPSKTDKVK (271 aa). Composition is skewed to acidic residues over residues 219 to 232 and 249 to 274; these read DSEDEKEEEESDED and SDEEEDDDGDLFADSEKEGDDIEDIE. The residue at position 284 (Ser-284) is a Phosphoserine. Residues 289 to 324 show a composition bias toward basic and acidic residues; the sequence is LAARIKGDISNQRKEGQTDGKPQKTVKEKKERRTPA. Thr-322 carries the phosphothreonine modification. The tract at residues 347–594 is sufficient for interaction with CCDC93; that stretch reads SRGGLFSNGQ…QTSSLQPQSQ (248 aa). The segment at 348–1334 is interaction with VPS35; that stretch reads RGGLFSNGQG…DDPLNAFGSQ (987 aa). The LFa 1 motif lies at 358-368; the sequence is LFDDEDESDLF. The residue at position 388 (Ser-388) is a Phosphoserine. 2 consecutive short sequence motifs (LFa) follow at residues 441–457 and 476–485; these read LFDDDDNDNDEDDNNFF and IFDDDEGDLF. The segment covering 442–454 has biased composition (acidic residues); that stretch reads FDDDDNDNDEDDN. Residues 492 to 650 form a disordered region; that stretch reads LPAASVSQTH…DSGATQGQEA (159 aa). Over residues 513–530 the composition is skewed to polar residues; it reads LPSSKNLKLVSETKTQKG. Short sequence motifs (LFa) lie at residues 531 to 542 and 566 to 577; these read LFSDEEDSEDLF and LFGDEDEEDSLF. Phosphoserine is present on residues Ser-533 and Ser-538. The span at 541–561 shows a compositional bias: low complexity; that stretch reads LFSSQSSSKPKSASLPSSQPP. Polar residues-rich tracts occupy residues 584-594 and 601-611; these read KQTSSLQPQSQ and EQPSKKTSALL. A phosphoserine mark is found at Ser-613 and Ser-614. The segment covering 625 to 639 has biased composition (basic and acidic residues); sequence SHTKLASDNKSKGEL. Short sequence motifs (LFa) lie at residues 658–670 and 686–698; these read LFEDDDDDEVDLF and LFEDDAESGSSLF. Residues 691–837 form a disordered region; that stretch reads AESGSSLFGL…SRPKSTGVFQ (147 aa). Phosphoserine occurs at positions 723, 747, 752, 783, and 798. Over residues 800 to 811 the composition is skewed to acidic residues; sequence FDEDEDKVEDES. Residues 818 to 830 show a composition bias toward basic and acidic residues; the sequence is DGREKGLKTDSRP. 2 consecutive short sequence motifs (LFa) follow at residues 835–843 and 852–858; these read VFQDEELLF and DPDVDLF. Disordered regions lie at residues 862-948 and 1014-1225; these read KKIR…PSSR and AQAD…SKTH. 2 positions are modified to phosphoserine: Ser-870 and Ser-873. Positions 874 to 884 match the LFa 10 motif; it reads LFGDDEDDDLF. Residues 894–906 show a composition bias toward basic and acidic residues; it reads PEKKGTLKKDHPV. The segment covering 908 to 919 has biased composition (polar residues); sequence LKNQDPLDSTQG. The interval 932–1334 is interaction with phospholipids; that stretch reads QDSSGLTPFK…DDPLNAFGSQ (403 aa). Residues 1023-1041 are compositionally biased toward basic residues; it reads NKSRVKVRGKRRPQTRAAR. Residues 1024–1042 are required for interaction with F-actin-capping protein subunit alpha (CAPZA1 or CAPZA2 or CAPZA3); the sequence is KSRVKVRGKRRPQTRAARR. Phosphoserine is present on residues Ser-1049, Ser-1067, Ser-1084, and Ser-1109. Short sequence motifs (LFa) lie at residues 1124 to 1131, 1164 to 1178, and 1194 to 1202; these read LFDSGDIF, AFPDLSEGSSTEDLF, and LLEDEEDLF. Phosphoserine occurs at positions 1169, 1172, and 1173. Over residues 1203–1225 the composition is skewed to basic and acidic residues; that stretch reads ADPRGKKNERKPDSHQDSVSKTH. 3 consecutive short sequence motifs (LFa) follow at residues 1227-1233, 1255-1263, and 1283-1292; these read IFEDDIF, LFDDNIDIF, and MFDDDTDDIF. The segment at 1294–1334 is disordered; the sequence is SGLQAKASKPKSQSAEAASEQRSEHKVASIFDDPLNAFGSQ. Residues 1297 to 1311 show a composition bias toward low complexity; sequence QAKASKPKSQSAEAA. An LFa 17 motif is present at residues 1323-1331; that stretch reads IFDDPLNAF. Position 1333 is a phosphoserine (Ser-1333).

Belongs to the FAM21 family. Component of the WASH core complex also described as WASH regulatory complex (SHRC) composed of WASHC1, WASHC2, WASHC3, WASHC4 and WASHC5; in the complex interacts (via N-terminus) directly with WASHC1. The WASH core complex associates with the F-actin-capping protein dimer (formed by CAPZA1, CAPZA2 or CAPZA3 and CAPZB) in a transient or substoichiometric manner which was initially described as WASH complex. Interacts with VPS35; mediates the association with the retromer CSC complex. Interacts with FKBP15. Interacts with CCDC93, CCDC22, VPS35L; indicative for an association of the WASH core complex with the CCC and retriever complexes. Directly interacts with TBC1D23.

Its subcellular location is the early endosome membrane. The protein localises to the cell membrane. In terms of biological role, acts as a component of the WASH core complex that functions as a nucleation-promoting factor (NPF) at the surface of endosomes, where it recruits and activates the Arp2/3 complex to induce actin polymerization, playing a key role in the fission of tubules that serve as transport intermediates during endosome sorting. Mediates the recruitment of the WASH core complex to endosome membranes via binding to phospholipids and VPS35 of the retromer CSC. Mediates the recruitment of the F-actin-capping protein dimer to the WASH core complex probably promoting localized F-actin polymerization needed for vesicle scission. Via its C-terminus binds various phospholipids, most strongly phosphatidylinositol 4-phosphate (PtdIns-(4)P), phosphatidylinositol 5-phosphate (PtdIns-(5)P) and phosphatidylinositol 3,5-bisphosphate (PtdIns-(3,5)P2). Involved in the endosome-to-plasma membrane trafficking and recycling of SNX27-retromer-dependent cargo proteins, such as GLUT1. Required for the association of DNAJC13, ENTR1, ANKRD50 with retromer CSC subunit VPS35. Required for the endosomal recruitment of CCC and retriever complexes subunits COMMD1 and CCDC93 as well as the retrievere complex subunit VPS35L. The polypeptide is WASH complex subunit 2 (Mus musculus (Mouse)).